Reading from the N-terminus, the 247-residue chain is Pyridoxine 5'-phosphate synthase (247 aa).

Asparagine 12 is a binding site for 3-amino-2-oxopropyl phosphate. Aspartate 14 to histidine 15 is a 1-deoxy-D-xylulose 5-phosphate binding site. 3-amino-2-oxopropyl phosphate is bound at residue arginine 23. Histidine 48 serves as the catalytic Proton acceptor. 1-deoxy-D-xylulose 5-phosphate contacts are provided by arginine 50 and histidine 55. Residue glutamate 75 is the Proton acceptor of the active site. Threonine 105 contributes to the 1-deoxy-D-xylulose 5-phosphate binding site. Residue histidine 196 is the Proton donor of the active site. Residues glycine 197 and glycine 218 to histidine 219 each bind 3-amino-2-oxopropyl phosphate.

The protein belongs to the PNP synthase family. In terms of assembly, homooctamer; tetramer of dimers.

It localises to the cytoplasm. The catalysed reaction is 3-amino-2-oxopropyl phosphate + 1-deoxy-D-xylulose 5-phosphate = pyridoxine 5'-phosphate + phosphate + 2 H2O + H(+). Its pathway is cofactor biosynthesis; pyridoxine 5'-phosphate biosynthesis; pyridoxine 5'-phosphate from D-erythrose 4-phosphate: step 5/5. Functionally, catalyzes the complicated ring closure reaction between the two acyclic compounds 1-deoxy-D-xylulose-5-phosphate (DXP) and 3-amino-2-oxopropyl phosphate (1-amino-acetone-3-phosphate or AAP) to form pyridoxine 5'-phosphate (PNP) and inorganic phosphate. The sequence is that of Pyridoxine 5'-phosphate synthase from Pseudomonas fluorescens (strain SBW25).